We begin with the raw amino-acid sequence, 188 residues long: Pro-adrenomedullin (188 aa).

The first 21 residues, 1 to 21 (MKLVPVALMYLGSLAFLGADT), serve as a signal peptide directing secretion. Arg41 carries the post-translational modification Arginine amide. Residues 45–92 (ELRLSSSYPTGIADLKAGPAQTVIRPQDVKGSSRSPQASIPDAARIRV) constitute a propeptide that is removed on maturation. Cys110 and Cys115 are oxidised to a cystine. Residues 131–177 (DKDGVAPRSKISPQGYGRRRRRSLPEASLGRTLRSQEPQAHGAPASP) form a disordered region. The residue at position 146 (Tyr146) is a Tyrosine amide. Positions 153–188 (SLPEASLGRTLRSQEPQAHGAPASPAHQVLATLFRI) are cleaved as a propeptide — preproAM C-terminal fragment.

It belongs to the adrenomedullin family. In terms of tissue distribution, highly expressed in adrenal glands, lung and kidney.

It localises to the secreted. In terms of biological role, adrenomedullin/ADM and proadrenomedullin N-20 terminal peptide/PAMP are peptide hormones that act as potent hypotensive and vasodilatator agents. Numerous actions have been reported most related to the physiologic control of fluid and electrolyte homeostasis. ADM function is mediated by the CALCRL-RAMP2 and CALCRL-RAMP3 receptor complexes with ADM showing the highest potency for the CALCRL-RAMP2 complex. In Sus scrofa (Pig), this protein is Pro-adrenomedullin (ADM).